The primary structure comprises 659 residues: Pesticidal crystal protein Cry3Ba (659 aa).

The interval 1–41 is disordered; the sequence is MIRMGGRKMNPNNRSEYDTIKVTPNSELPTNHNQYPLADNP. The segment covering 22–41 has biased composition (polar residues); that stretch reads VTPNSELPTNHNQYPLADNP.

Belongs to the delta endotoxin family.

Its function is as follows. Promotes colloidosmotic lysis by binding to the midgut epithelial cells of Coleoptera. The polypeptide is Pesticidal crystal protein Cry3Ba (cry3Ba) (Bacillus thuringiensis subsp. tolworthi).